Here is a 148-residue protein sequence, read N- to C-terminus: Arginine repressor (148 aa).

Belongs to the ArgR family.

It localises to the cytoplasm. It participates in amino-acid biosynthesis; L-arginine biosynthesis [regulation]. Regulates arginine biosynthesis genes. In Prosthecochloris aestuarii (strain DSM 271 / SK 413), this protein is Arginine repressor.